Reading from the N-terminus, the 389-residue chain is Cytochrome b (389 aa).

8 consecutive transmembrane segments (helical) span residues 32 to 52 (FGFF…LLAM), 76 to 98 (WLLR…IHML), 113 to 133 (LWVS…LGYV), 179 to 199 (FFSL…LHII), 225 to 245 (FTIK…TFVF), 290 to 310 (LGVL…FLTI), 325 to 345 (LFWS…QPAA), and 353 to 373 (LYST…IYIV). Heme b contacts are provided by His82 and His96. The heme b site is built by His183 and His197.

The protein belongs to the cytochrome b family. As to quaternary structure, the main subunits of complex b-c1 are: cytochrome b, cytochrome c1 and the Rieske protein. Heme b is required as a cofactor.

It is found in the mitochondrion inner membrane. Component of the ubiquinol-cytochrome c reductase complex (complex III or cytochrome b-c1 complex) that is part of the mitochondrial respiratory chain. The b-c1 complex mediates electron transfer from ubiquinol to cytochrome c. Contributes to the generation of a proton gradient across the mitochondrial membrane that is then used for ATP synthesis. This is Cytochrome b (cytB) from Dictyostelium discoideum (Social amoeba).